A 169-amino-acid chain; its full sequence is X polypeptide (169 aa).

Belongs to the IagB/IpgF/P19 family.

This chain is X polypeptide (yubQ), found in Escherichia coli (strain K12).